We begin with the raw amino-acid sequence, 598 residues long: Aspartate--tRNA ligase (598 aa).

Position 175 (glutamate 175) interacts with L-aspartate. The segment at glutamine 199–lysine 202 is aspartate. Arginine 221 serves as a coordination point for L-aspartate. ATP is bound by residues arginine 221–glutamate 223 and glutamine 230. Position 450 (histidine 450) interacts with L-aspartate. Glutamate 486 contributes to the ATP binding site. Arginine 493 contacts L-aspartate. Glycine 538 to arginine 541 provides a ligand contact to ATP.

Belongs to the class-II aminoacyl-tRNA synthetase family. Type 1 subfamily. Homodimer.

Its subcellular location is the cytoplasm. It carries out the reaction tRNA(Asp) + L-aspartate + ATP = L-aspartyl-tRNA(Asp) + AMP + diphosphate. Its function is as follows. Catalyzes the attachment of L-aspartate to tRNA(Asp) in a two-step reaction: L-aspartate is first activated by ATP to form Asp-AMP and then transferred to the acceptor end of tRNA(Asp). In Lactiplantibacillus plantarum (strain ATCC BAA-793 / NCIMB 8826 / WCFS1) (Lactobacillus plantarum), this protein is Aspartate--tRNA ligase.